We begin with the raw amino-acid sequence, 416 residues long: Phosphoglycerate kinase (416 aa).

(2R)-3-phosphoglycerate contacts are provided by V23, D24, F25, N26, Q38, R39, S62, H63, G65, R66, L121, R122, H168, and R169. G212 serves as a coordination point for ADP. A CDP-binding site is contributed by G212. A213 and K214 together coordinate AMP. Position 213 (A213) interacts with ATP. A213 serves as a coordination point for Mg(2+). D217 contacts CDP. D217 contacts Mg(2+). An AMP-binding site is contributed by K218. Residue K218 participates in ATP binding. G236 serves as a coordination point for ADP. G236 is a binding site for CDP. Residues G237 and G311 each contribute to the AMP site. The ATP site is built by G237 and G311. CDP is bound by residues G336 and F341. F341 contributes to the ADP binding site. Position 342 (E342) interacts with AMP. Positions 342, 373, and 374 each coordinate ATP. Residue D373 participates in Mg(2+) binding.

The protein belongs to the phosphoglycerate kinase family. In terms of assembly, monomer. The cofactor is Mg(2+).

The protein localises to the cytoplasm. It localises to the mitochondrion. It catalyses the reaction (2R)-3-phosphoglycerate + ATP = (2R)-3-phospho-glyceroyl phosphate + ADP. It functions in the pathway carbohydrate degradation; glycolysis; pyruvate from D-glyceraldehyde 3-phosphate: step 2/5. Its function is as follows. Catalyzes one of the two ATP producing reactions in the glycolytic pathway via the reversible conversion of 1,3-diphosphoglycerate to 3-phosphoglycerate. Both L- and D- forms of purine and pyrimidine nucleotides can be used as substrates, but the activity is much lower on pyrimidines. Negatively regulates the biosynthesis of acetyl-CoA from pyruvate in the mitochondrion. The sequence is that of Phosphoglycerate kinase (PGK1) from Debaryomyces hansenii (strain ATCC 36239 / CBS 767 / BCRC 21394 / JCM 1990 / NBRC 0083 / IGC 2968) (Yeast).